The sequence spans 391 residues: Polysialic acid biosynthesis protein P7 (391 aa).

Its function is as follows. May be involved in the synthesis of polysialic acid (PSA). This Escherichia coli protein is Polysialic acid biosynthesis protein P7 (neuC).